The sequence spans 261 residues: Acidic leucine-rich nuclear phosphoprotein 32 family member B (261 aa).

LRR repeat units lie at residues 16-40, 43-64, 65-87, and 89-110; these read PAAV…LTAE, NLEF…PKLP, KLKK…AEKL, and NLTH…EPLK. Position 86 is an N6-acetyllysine (Lys-86). Positions 123–161 constitute an LRRCT domain; sequence CEVTNLNDYRESVFKLLPQLTYLDGYDREDREAPDSDAE. The disordered stretch occupies residues 149–261; the sequence is DREDREAPDS…RETDDEGEDD (113 aa). Positions 157 to 243 are enriched in acidic residues; that stretch reads DSDAEVDGVD…DEDEDEEEEE (87 aa). A Phosphoserine modification is found at Ser-158. Residues 244 to 254 are compositionally biased toward basic and acidic residues; that stretch reads SGKGEKRKRET. Residues 249–252 carry the Nuclear localization signal motif; that stretch reads KRKR. A Phosphothreonine modification is found at Thr-254.

Belongs to the ANP32 family. As to quaternary structure, interacts with histones H3 and H4. Interacts with KLF5; this interaction induces promoter region-specific histone incorporation and inhibition of histone acetylation by ANP32B. In terms of processing, some Glu residues are glycylated by TTLL8; a modification that generates a side chains of glycine on the gamma-carboxyl groups of specific glutamate residues. Directly cleaved by caspase-3/CASP3.

It localises to the nucleus. Its function is as follows. Multifunctional protein that is involved in the regulation of many processes including cell proliferation, apoptosis, cell cycle progression or transcription. Regulates the proliferation of neuronal stem cells, differentiation of leukemic cells and progression from G1 to S phase of the cell cycle. As negative regulator of caspase-3-dependent apoptosis, may act as an antagonist of ANP32A in regulating tissue homeostasis. Exhibits histone chaperone properties, able to recruit histones to certain promoters, thus regulating the transcription of specific genes. Also plays an essential role in the nucleocytoplasmic transport of specific mRNAs via the uncommon nuclear mRNA export receptor XPO1/CRM1. Participates in the regulation of adequate adaptive immune responses by acting on mRNA expression and cell proliferation. The protein is Acidic leucine-rich nuclear phosphoprotein 32 family member B (ANP32B) of Bos taurus (Bovine).